A 473-amino-acid chain; its full sequence is Crt homolog 1 (473 aa).

Over 1–49 (MTNNDKEKQPLLSSINNEDDNGATINIVEPVPWYSNIPQKIKNSMSKET) the chain is Cytoplasmic. Residues 50–70 (ITILIYVVLYVTSGVINSVLL) traverse the membrane as a helical segment. Residues 71 to 80 (KKVMNKFTNY) lie on the Vacuolar side of the membrane. Residues 81 to 101 (AFFLSQLTNFGYVPIFGAVTA) traverse the membrane as a helical segment. Residues 102–121 (YKIFFTKDIPQETRDFPTRK) lie on the Cytoplasmic side of the membrane. Residues 122–142 (FAIMGALDAITGFFVVIGGVS) form a helical membrane-spanning segment. The Vacuolar segment spans residues 143–146 (TSGP). A helical transmembrane segment spans residues 147-167 (LQQLLNQAIIPFTMIASFIFL). Residues 168–175 (KERYSLIQ) are Cytoplasmic-facing. The chain crosses the membrane as a helical span at residues 176-196 (LGGALVIIGGVVTSLIPSLLG). Residues 197-207 (GSSGGNKPFWN) are Vacuolar-facing. A helical transmembrane segment spans residues 208–228 (FFYLLSVIPGALSNVYKDIGF). Over 229–248 (QAVADMDVWYLQYWDSLYQS) the chain is Cytoplasmic. Residues 249–269 (IFGLFLFPVNNWLPPPATVKF) traverse the membrane as a helical segment. The Vacuolar portion of the chain corresponds to 270 to 322 (EQILPFMKEGAECLAGINSIIPSYINGTSSFTATSCTYAPDATITCDDCHNAW). N-linked (GlcNAc...) asparagine glycosylation is present at Asn-295. The helical transmembrane segment at 323–343 (IVIILYMTINIIYNIFILLVL) threads the bilayer. Over 344–352 (KHAGATVYS) the chain is Cytoplasmic. Residues 353–373 (IANTLRLPLTNIVFSIHFIMG) form a helical membrane-spanning segment. A topological domain (vacuolar) is located at residue Ser-374. A helical membrane pass occupies residues 375–395 (AVSPFSGLSVAGLVIILVGLG). The Cytoplasmic portion of the chain corresponds to 396-473 (GYRVGSMIKQ…AANNNNYGDA (78 aa)).

Belongs to the CRT-like transporter family.

It localises to the vacuole membrane. Its function is as follows. Nutrient transporter. Involved in maintaining the osmotic homeostasis of the digestive vacuole. The polypeptide is Crt homolog 1 (crtp1) (Dictyostelium discoideum (Social amoeba)).